The chain runs to 308 residues: Serine/threonine-protein phosphatase 4 catalytic subunit (308 aa).

D51, H53, D79, and N111 together coordinate Mn(2+). H112 functions as the Proton donor in the catalytic mechanism. Mn(2+) is bound by residues H161 and H235. L308 carries the leucine methyl ester modification.

Belongs to the PPP phosphatase family. PP-4 (PP-X) subfamily. In terms of assembly, catalytic subunit of the histone H2A phosphatase complex (HTP-C) containing PPH3, PSY2 and PSY4. Mn(2+) serves as cofactor.

It localises to the cytoplasm. It is found in the nucleus. It carries out the reaction O-phospho-L-seryl-[protein] + H2O = L-seryl-[protein] + phosphate. The catalysed reaction is O-phospho-L-threonyl-[protein] + H2O = L-threonyl-[protein] + phosphate. In terms of biological role, forms the histone H2A phosphatase complex in association with the regulatory subunits PSY2 and PSY4, which dephosphorylates H2AS128ph (gamma-H2A) that has been displaced from sites of DNA lesions in the double-stranded DNA break repair process. Dephosphorylation is necessary for efficient recovery from the DNA damage checkpoint. In Kluyveromyces lactis (strain ATCC 8585 / CBS 2359 / DSM 70799 / NBRC 1267 / NRRL Y-1140 / WM37) (Yeast), this protein is Serine/threonine-protein phosphatase 4 catalytic subunit (PPH3).